Consider the following 88-residue polypeptide: MPQAKLKDLLEFPCAFTFKVVGANRADLIDDVVVVVQKYAKGDYNPRQQLSSKGTYNSVSIDIIAEHIEQVEVLYVELAKIDGVRMVL.

This sequence belongs to the UPF0250 family.

This is UPF0250 protein PM1928 from Pasteurella multocida (strain Pm70).